Consider the following 389-residue polypeptide: Homoserine O-acetyltransferase (389 aa).

Positions 63–371 (NAVLVLHALT…SSDYGHDGFL (309 aa)) constitute an AB hydrolase-1 domain. Residue serine 168 is the Nucleophile of the active site. Arginine 240 serves as a coordination point for substrate. Catalysis depends on residues aspartate 334 and histidine 367. Residue aspartate 368 coordinates substrate.

The protein belongs to the AB hydrolase superfamily. MetX family. As to quaternary structure, homodimer.

It is found in the cytoplasm. The enzyme catalyses L-homoserine + acetyl-CoA = O-acetyl-L-homoserine + CoA. It functions in the pathway amino-acid biosynthesis; L-methionine biosynthesis via de novo pathway; O-acetyl-L-homoserine from L-homoserine: step 1/1. Transfers an acetyl group from acetyl-CoA to L-homoserine, forming acetyl-L-homoserine. The chain is Homoserine O-acetyltransferase from Clavibacter michiganensis subsp. michiganensis (strain NCPPB 382).